The primary structure comprises 397 residues: Succinate--CoA ligase [ADP-forming] subunit beta (397 aa).

In terms of domain architecture, ATP-grasp spans 9 to 254 (KALLKSFGAP…KSEEDEKEIQ (246 aa)). Residues lysine 46, 53–55 (GRG), glutamate 109, alanine 112, and glutamate 117 each bind ATP. Asparagine 209 and aspartate 223 together coordinate Mg(2+). Substrate-binding positions include asparagine 274 and 331–333 (GIM).

The protein belongs to the succinate/malate CoA ligase beta subunit family. As to quaternary structure, heterotetramer of two alpha and two beta subunits. The cofactor is Mg(2+).

The catalysed reaction is succinate + ATP + CoA = succinyl-CoA + ADP + phosphate. It catalyses the reaction GTP + succinate + CoA = succinyl-CoA + GDP + phosphate. The protein operates within carbohydrate metabolism; tricarboxylic acid cycle; succinate from succinyl-CoA (ligase route): step 1/1. Its function is as follows. Succinyl-CoA synthetase functions in the citric acid cycle (TCA), coupling the hydrolysis of succinyl-CoA to the synthesis of either ATP or GTP and thus represents the only step of substrate-level phosphorylation in the TCA. The beta subunit provides nucleotide specificity of the enzyme and binds the substrate succinate, while the binding sites for coenzyme A and phosphate are found in the alpha subunit. The sequence is that of Succinate--CoA ligase [ADP-forming] subunit beta from Rhizobium rhizogenes (strain K84 / ATCC BAA-868) (Agrobacterium radiobacter).